The primary structure comprises 314 residues: Olfactory receptor 9A1 (314 aa).

The Extracellular segment spans residues 1 to 24 (MLGNYSSATEFFLLGFPGSQEVCR). Residue Asn4 is glycosylated (N-linked (GlcNAc...) asparagine). A helical membrane pass occupies residues 25-45 (ILFATFFLLYAVTVMGNVVII). The Cytoplasmic portion of the chain corresponds to 46-64 (ITVCVDKCLQSPIYFFLGH). The chain crosses the membrane as a helical span at residues 65-85 (LCVLEILITSTAVPFMLWGLL). Residues 86-99 (LPSTQIMSLTACAA) lie on the Extracellular side of the membrane. A disulfide bond links Cys97 and Cys179. Residues 100–120 (QLYLYLSLGTLELALMGVMAV) form a helical membrane-spanning segment. The Cytoplasmic portion of the chain corresponds to 121-140 (DRYVAVCNPLRYNIIMNSST). Residues 141–161 (FIWVIIVSWVLGFLSEIWPVY) form a helical membrane-spanning segment. The Extracellular segment spans residues 162-196 (ATFQLTFCKSSVLDHFYCDRGQLLKVSCEDTLFRE). A helical membrane pass occupies residues 197–217 (FILFLMAVFIIIGSLIPTIVS). Over 218–239 (YTYIISTNLKIPSASGWRKSFS) the chain is Cytoplasmic. The helical transmembrane segment at 240 to 260 (TCASHFTYVVIGYGSCLFLYV) threads the bilayer. Residues 261-271 (KPKQTQAAEYN) are Extracellular-facing. Residues 272 to 292 (RVVSLLVLVVTPFLNPFIFTL) traverse the membrane as a helical segment. At 293–314 (RNDKFIQAFGDGMKHCYKLLKN) the chain is on the cytoplasmic side.

The protein belongs to the G-protein coupled receptor 1 family.

The protein resides in the cell membrane. Its function is as follows. Odorant receptor. This Homo sapiens (Human) protein is Olfactory receptor 9A1 (OR9A1P).